Consider the following 302-residue polypeptide: MDQQRLTHLKQLEAESIHIIREVAAEFDNPVMMYSIGKDSSVMLHLTRKAFYPGKIPFPLLHVDTDWKFRDMITFRDTTAKKYGFDLIVHKNPEGLAAGINPFDHGSSKHTDIMKTQGLKQALNKYGFDAAFGGARRDEEKSRAKERVYSFRDKNHTWDPKNQRPELWRTYNGQINKGESIRVFPLSNWTELDIWQYIYLENIEIVPLYLADVRPVVQRDGMLIMVDDDRMKLREGEQIEHKSVRFRTLGCYPLTGAIESQANTLTEIIEEMLVATSSERQGRAIDHDQSGSMELKKRQGYF.

The interval R280–F302 is disordered.

This sequence belongs to the PAPS reductase family. CysD subfamily. In terms of assembly, heterodimer composed of CysD, the smaller subunit, and CysN.

It carries out the reaction sulfate + ATP + H(+) = adenosine 5'-phosphosulfate + diphosphate. It participates in sulfur metabolism; hydrogen sulfide biosynthesis; sulfite from sulfate: step 1/3. In terms of biological role, with CysN forms the ATP sulfurylase (ATPS) that catalyzes the adenylation of sulfate producing adenosine 5'-phosphosulfate (APS) and diphosphate, the first enzymatic step in sulfur assimilation pathway. APS synthesis involves the formation of a high-energy phosphoric-sulfuric acid anhydride bond driven by GTP hydrolysis by CysN coupled to ATP hydrolysis by CysD. In Vibrio cholerae serotype O1 (strain ATCC 39315 / El Tor Inaba N16961), this protein is Sulfate adenylyltransferase subunit 2.